We begin with the raw amino-acid sequence, 67 residues long: ATP synthase F(0) complex subunit 8 (67 aa).

The helical transmembrane segment at 8–24 threads the bilayer; that stretch reads TWFTTIVAMILSLFILM. Residue Lys54 is modified to N6-acetyllysine; alternate. Lys54 is subject to N6-succinyllysine; alternate. N6-acetyllysine is present on Lys57.

It belongs to the ATPase protein 8 family. Component of the ATP synthase complex composed at least of ATP5F1A/subunit alpha, ATP5F1B/subunit beta, ATP5MC1/subunit c (homooctomer), MT-ATP6/subunit a, MT-ATP8/subunit 8, ATP5ME/subunit e, ATP5MF/subunit f, ATP5MG/subunit g, ATP5MK/subunit k, ATP5MJ/subunit j, ATP5F1C/subunit gamma, ATP5F1D/subunit delta, ATP5F1E/subunit epsilon, ATP5PF/subunit F6, ATP5PB/subunit b, ATP5PD/subunit d, ATP5PO/subunit OSCP. ATP synthase complex consists of a soluble F(1) head domain (subunits alpha(3) and beta(3)) - the catalytic core - and a membrane F(0) domain - the membrane proton channel (subunits c, a, 8, e, f, g, k and j). These two domains are linked by a central stalk (subunits gamma, delta, and epsilon) rotating inside the F1 region and a stationary peripheral stalk (subunits F6, b, d, and OSCP). Interacts with PRICKLE3.

Its subcellular location is the mitochondrion membrane. Functionally, subunit 8, of the mitochondrial membrane ATP synthase complex (F(1)F(0) ATP synthase or Complex V) that produces ATP from ADP in the presence of a proton gradient across the membrane which is generated by electron transport complexes of the respiratory chain. ATP synthase complex consist of a soluble F(1) head domain - the catalytic core - and a membrane F(1) domain - the membrane proton channel. These two domains are linked by a central stalk rotating inside the F(1) region and a stationary peripheral stalk. During catalysis, ATP synthesis in the catalytic domain of F(1) is coupled via a rotary mechanism of the central stalk subunits to proton translocation. In vivo, can only synthesize ATP although its ATP hydrolase activity can be activated artificially in vitro. Part of the complex F(0) domain. In Oryctolagus cuniculus (Rabbit), this protein is ATP synthase F(0) complex subunit 8.